We begin with the raw amino-acid sequence, 434 residues long: Trigger factor (434 aa).

The region spanning 161–246 is the PPIase FKBP-type domain; sequence EDRATIDFSG…LKKVEERELP (86 aa).

It belongs to the FKBP-type PPIase family. Tig subfamily.

The protein resides in the cytoplasm. It carries out the reaction [protein]-peptidylproline (omega=180) = [protein]-peptidylproline (omega=0). In terms of biological role, involved in protein export. Acts as a chaperone by maintaining the newly synthesized protein in an open conformation. Functions as a peptidyl-prolyl cis-trans isomerase. The sequence is that of Trigger factor from Erwinia tasmaniensis (strain DSM 17950 / CFBP 7177 / CIP 109463 / NCPPB 4357 / Et1/99).